The chain runs to 509 residues: GRAS family protein RAD1 (509 aa).

The 384-residue stretch at 125 to 508 folds into the GRAS domain; it reads EDGCADGMRL…KPIVAASCWK (384 aa). The interval 132–198 is leucine repeat I (LRI); it reads MRLVQLLIAC…IQPIGSGAGV (67 aa). The VHIID stretch occupies residues 217–286; sequence YRLVYETCPH…SGHGRVRRLR (70 aa). Residues 248 to 252 carry the VHIID motif; that stretch reads VHVVD. Positions 299–331 are leucine repeat II (LRII); the sequence is AIGDELSDYANNLGINLEFSVVQKNLENLQPED. The interval 340-431 is PFYRE; it reads LVVNSILQLH…QFYFAEEIKN (92 aa). An SAW region spans residues 434–508; the sequence is SCEGPLRMER…KPIVAASCWK (75 aa).

It belongs to the GRAS family. In terms of assembly, interacts with RAM1 and NSP2. In terms of tissue distribution, expressed in roots under low phosphate (Pi) conditions.

The protein resides in the nucleus. Transcription factor acting as a regulator of arbuscular mycorrhiza (AM)-related genes (e.g. PT4, STR and RAM2). Required for the morphogenesis of arbuscules upon symbiosis with AM fungi (e.g. Rhizophagus irregularis). Also involved in restricting mycorrhizal colonization of the root meristem. In Lotus japonicus (Lotus corniculatus var. japonicus), this protein is GRAS family protein RAD1.